The primary structure comprises 1438 residues: DNA polymerase III PolC-type (1438 aa).

Residues 422–578 (YVVFDVETTG…YDTEATAYIF (157 aa)) form the Exonuclease domain.

This sequence belongs to the DNA polymerase type-C family. PolC subfamily.

It is found in the cytoplasm. It catalyses the reaction DNA(n) + a 2'-deoxyribonucleoside 5'-triphosphate = DNA(n+1) + diphosphate. Its function is as follows. Required for replicative DNA synthesis. This DNA polymerase also exhibits 3' to 5' exonuclease activity. The chain is DNA polymerase III PolC-type from Staphylococcus aureus (strain Mu3 / ATCC 700698).